We begin with the raw amino-acid sequence, 1323 residues long: PAS domain-containing serine/threonine-protein kinase (1323 aa).

An N-acetylmethionine modification is found at M1. At S19 the chain carries Phosphoserine. A disordered region spans residues 20-47 (LPLPVSAEGPAAQTTAEPSRSFSSAHRH). Positions 31–43 (AQTTAEPSRSFSS) are enriched in polar residues. The residue at position 34 (T34) is a Phosphothreonine. 2 consecutive PAS domains span residues 119–190 (SSPL…MEAD) and 335–402 (YRAS…SLQL). Residue S582 is modified to Phosphoserine. A disordered region spans residues 837-857 (AASDRESPGHVPSTLDAGPED). S939 is subject to Phosphoserine. Residues 999 to 1251 (YSTMSPLGSG…LEKLVTDPWV (253 aa)) form the Protein kinase domain. ATP contacts are provided by residues 1005–1013 (LGSGAFGFV), K1028, and 1082–1089 (EKHGSGLD). The active-site Proton acceptor is D1128. D1146 contributes to the ATP binding site. Phosphothreonine; by autocatalysis is present on residues T1161 and T1165. Residues 1298–1323 (CGGPVPGEAPNGQGCLHPGDPRLLTS) form a disordered region.

This sequence belongs to the protein kinase superfamily. CAMK Ser/Thr protein kinase family. Autophosphorylated on Thr-1161 and Thr-1165. Autophosphorylation is activated by phospholipids. As to expression, ubiquitously expressed, with slightly higher expression in brain, prostate and testis. Reduced expression was found in placenta. Present in germ cells of testis and in the midpiece of sperm tails (at protein level).

The protein resides in the cytoplasm. Its subcellular location is the nucleus. It catalyses the reaction L-seryl-[protein] + ATP = O-phospho-L-seryl-[protein] + ADP + H(+). The catalysed reaction is L-threonyl-[protein] + ATP = O-phospho-L-threonyl-[protein] + ADP + H(+). Its activity is regulated as follows. Protein kinase activity is inhibited by the first PAS domain: binding of an unidentified ligand desinhibits the protein kinase activity. May be activated by autophosphorylation on Thr-1161 and Thr-1165. The activating role of autophosphorylation at Thr-1161 is unclear: according to a report, autophosphorylation at Thr-1161 does not play a major role in activation. Autophosphorylation is enhanced upon phosphatidylinositol monophosphate (phosphatidylinositol 4-phosphate) binding and inhibited upon phosphatidylinositol bi- and tri-phosphate binding. In contrast, phosphorylation of target proteins is inhibited upon all phosphatidylinositol-binding (phosphatidylinositol mono- bi- and tri-phosphate). Functionally, serine/threonine-protein kinase involved in energy homeostasis and protein translation. Phosphorylates EEF1A1, GYS1, PDX1 and RPS6. Probably plays a role under changing environmental conditions (oxygen, glucose, nutrition), rather than under standard conditions. Acts as a sensor involved in energy homeostasis: regulates glycogen synthase synthesis by mediating phosphorylation of GYS1, leading to GYS1 inactivation. May be involved in glucose-stimulated insulin production in pancreas and regulation of glucagon secretion by glucose in alpha cells; however such data require additional evidences. May play a role in regulation of protein translation by phosphorylating EEF1A1, leading to increase translation efficiency. May also participate in respiratory regulation. This is PAS domain-containing serine/threonine-protein kinase (PASK) from Homo sapiens (Human).